We begin with the raw amino-acid sequence, 428 residues long: Bacteriochlorophyll synthase 44.5 kDa chain (428 aa).

The next 12 membrane-spanning stretches (helical) occupy residues 3 to 23, 32 to 52, 73 to 93, 115 to 135, 144 to 164, 172 to 192, 225 to 245, 269 to 289, 291 to 311, 317 to 337, 358 to 378, and 393 to 413; these read LGWLQIFRLGLVQLCIGAVVV, LMVVELALPAVLPGALVALHY, FFVILGMAVLALGAFLAAVAV, GFGVGASGTSLLALLASATEP, ITWLLMIFGIAVTAGTVGHFL, LLWIVAIVTLGAVVLTTLAVW, AFTFFLFLSMTAYFLQELILE, GVFFGMLTVGLALSGLKIGSL, GWVVTGCLGSSLALMAIVALG, ALVPAVIGLGFFNGIFAVAAI, LWGAAQAIAAGFGGLVGAGAA, and LVFGAQALLFIVAAMMATGVV.

This sequence belongs to the PucC family.

It localises to the membrane. It participates in porphyrin-containing compound metabolism; bacteriochlorophyll biosynthesis (light-independent). The chain is Bacteriochlorophyll synthase 44.5 kDa chain from Rhodobacter capsulatus (strain ATCC BAA-309 / NBRC 16581 / SB1003).